The chain runs to 288 residues: 4-diphosphocytidyl-2-C-methyl-D-erythritol kinase (288 aa).

Lys8 is an active-site residue. Pro92 to Thr102 contacts ATP. The active site involves Asp134.

Belongs to the GHMP kinase family. IspE subfamily.

It catalyses the reaction 4-CDP-2-C-methyl-D-erythritol + ATP = 4-CDP-2-C-methyl-D-erythritol 2-phosphate + ADP + H(+). The protein operates within isoprenoid biosynthesis; isopentenyl diphosphate biosynthesis via DXP pathway; isopentenyl diphosphate from 1-deoxy-D-xylulose 5-phosphate: step 3/6. Functionally, catalyzes the phosphorylation of the position 2 hydroxy group of 4-diphosphocytidyl-2C-methyl-D-erythritol. This Clostridium perfringens (strain ATCC 13124 / DSM 756 / JCM 1290 / NCIMB 6125 / NCTC 8237 / Type A) protein is 4-diphosphocytidyl-2-C-methyl-D-erythritol kinase.